Consider the following 716-residue polypeptide: Polyribonucleotide nucleotidyltransferase (716 aa).

Asp486 and Asp492 together coordinate Mg(2+). The 60-residue stretch at 553–612 (PHIYNIKINPEKIKDVIGKGGAVIRALSDETDTKIDISDDGNITIAALSQKSAAFAQQRI) folds into the KH domain. Positions 622-690 (GRIYQGTVTR…RQGRIRLSIK (69 aa)) constitute an S1 motif domain.

The protein belongs to the polyribonucleotide nucleotidyltransferase family. In terms of assembly, component of the RNA degradosome, which is a multiprotein complex involved in RNA processing and mRNA degradation. Mg(2+) serves as cofactor.

The protein resides in the cytoplasm. The enzyme catalyses RNA(n+1) + phosphate = RNA(n) + a ribonucleoside 5'-diphosphate. In terms of biological role, involved in mRNA degradation. Catalyzes the phosphorolysis of single-stranded polyribonucleotides processively in the 3'- to 5'-direction. The sequence is that of Polyribonucleotide nucleotidyltransferase from Hamiltonella defensa subsp. Acyrthosiphon pisum (strain 5AT).